Here is a 386-residue protein sequence, read N- to C-terminus: Succinate--CoA ligase [ADP-forming] subunit beta (386 aa).

An ATP-grasp domain is found at 9–244 (KELLRQYGVA…LDEEDPKEIE (236 aa)). ATP is bound by residues Lys46, 53 to 55 (GRG), Glu99, Cys102, and Glu107. Positions 199 and 213 each coordinate Mg(2+). Substrate contacts are provided by residues Asn264 and 321–323 (GIM).

It belongs to the succinate/malate CoA ligase beta subunit family. Heterotetramer of two alpha and two beta subunits. Requires Mg(2+) as cofactor.

The catalysed reaction is succinate + ATP + CoA = succinyl-CoA + ADP + phosphate. The enzyme catalyses GTP + succinate + CoA = succinyl-CoA + GDP + phosphate. Its pathway is carbohydrate metabolism; tricarboxylic acid cycle; succinate from succinyl-CoA (ligase route): step 1/1. Its function is as follows. Succinyl-CoA synthetase functions in the citric acid cycle (TCA), coupling the hydrolysis of succinyl-CoA to the synthesis of either ATP or GTP and thus represents the only step of substrate-level phosphorylation in the TCA. The beta subunit provides nucleotide specificity of the enzyme and binds the substrate succinate, while the binding sites for coenzyme A and phosphate are found in the alpha subunit. The sequence is that of Succinate--CoA ligase [ADP-forming] subunit beta from Halalkalibacterium halodurans (strain ATCC BAA-125 / DSM 18197 / FERM 7344 / JCM 9153 / C-125) (Bacillus halodurans).